The primary structure comprises 501 residues: MELHNDEKRLLKAFQESNEKIMNLEELSKYIEKEKVMRAAFWLSGRDFLEIIENKTKICELTELGNQSLDLGIPERKVANYIKENNLESIPIKDLSKILEKDETGAALGNLKKKGLVAIDKGNIVFKDLDYVDIEEEVLKKASEDFNLSNYSEDEVKIIENLKKRGFLKINEVVDRSFELKNAGIDFIKKPIEIKEEITQLTREMIVSGKWNDYFIRPYDAKIPTEELYPAKAHPMSKIIQEVNEVLISMGFKEVKSQIVQTEFWNFDTLFEPQDHPARDMQDTFFVKYPNTGTVPKDLLEKVKGIHECGTIGDEKISKGWCYNFDENVSERTVLRTHTTVSSIKYLASLSECERENAQKVFCIDRVFRNEAIDYKHLPEFYQCEGIVMAEDVNFDNLVGILKEFLQKLGFEKVRIRPAYFPFTEPSLEAEVYMEGKGWLELLGAGIFRPEVLEPFGIKKPVLAWGIGLSRLAMLRLGLTDIRELHKNDMQWLKKTVISEE.

L-phenylalanine is bound by residues Thr340 and Phe423. A Mg(2+)-binding site is contributed by Glu425. Residue Phe448 coordinates L-phenylalanine.

This sequence belongs to the class-II aminoacyl-tRNA synthetase family. Phe-tRNA synthetase alpha subunit type 2 subfamily. As to quaternary structure, tetramer of two alpha and two beta subunits. Requires Mg(2+) as cofactor.

Its subcellular location is the cytoplasm. The enzyme catalyses tRNA(Phe) + L-phenylalanine + ATP = L-phenylalanyl-tRNA(Phe) + AMP + diphosphate + H(+). The chain is Phenylalanine--tRNA ligase alpha subunit from Methanococcus maripaludis (strain C5 / ATCC BAA-1333).